The following is a 154-amino-acid chain: SsrA-binding protein (154 aa).

It belongs to the SmpB family.

Its subcellular location is the cytoplasm. Required for rescue of stalled ribosomes mediated by trans-translation. Binds to transfer-messenger RNA (tmRNA), required for stable association of tmRNA with ribosomes. tmRNA and SmpB together mimic tRNA shape, replacing the anticodon stem-loop with SmpB. tmRNA is encoded by the ssrA gene; the 2 termini fold to resemble tRNA(Ala) and it encodes a 'tag peptide', a short internal open reading frame. During trans-translation Ala-aminoacylated tmRNA acts like a tRNA, entering the A-site of stalled ribosomes, displacing the stalled mRNA. The ribosome then switches to translate the ORF on the tmRNA; the nascent peptide is terminated with the 'tag peptide' encoded by the tmRNA and targeted for degradation. The ribosome is freed to recommence translation, which seems to be the essential function of trans-translation. This Enterococcus hirae (strain ATCC 9790 / DSM 20160 / JCM 8729 / LMG 6399 / NBRC 3181 / NCIMB 6459 / NCDO 1258 / NCTC 12367 / WDCM 00089 / R) protein is SsrA-binding protein.